A 100-amino-acid polypeptide reads, in one-letter code: Large ribosomal subunit protein bL28 (100 aa).

Belongs to the bacterial ribosomal protein bL28 family.

This is Large ribosomal subunit protein bL28 from Ehrlichia ruminantium (strain Welgevonden).